A 309-amino-acid chain; its full sequence is tRNA pseudouridine synthase B (309 aa).

The active-site Nucleophile is the Asp-40.

The protein belongs to the pseudouridine synthase TruB family. Type 1 subfamily.

The enzyme catalyses uridine(55) in tRNA = pseudouridine(55) in tRNA. Its function is as follows. Responsible for synthesis of pseudouridine from uracil-55 in the psi GC loop of transfer RNAs. The protein is tRNA pseudouridine synthase B of Mycobacterium avium (strain 104).